The chain runs to 695 residues: Polyribonucleotide nucleotidyltransferase (695 aa).

Residues Asp-486 and Asp-492 each contribute to the Mg(2+) site. A KH domain is found at 553–612 (PRIETMQINTSKIATVIGPGGKQIRQIIERSGAQVDINDDGVINIAASTQESINKAKELI). Residues 622 to 690 (GKVYNGRVTS…EKGQLKLSHK (69 aa)) enclose the S1 motif domain.

Belongs to the polyribonucleotide nucleotidyltransferase family. Mg(2+) serves as cofactor.

Its subcellular location is the cytoplasm. It catalyses the reaction RNA(n+1) + phosphate = RNA(n) + a ribonucleoside 5'-diphosphate. Involved in mRNA degradation. Catalyzes the phosphorolysis of single-stranded polyribonucleotides processively in the 3'- to 5'-direction. In Chlamydia trachomatis serovar A (strain ATCC VR-571B / DSM 19440 / HAR-13), this protein is Polyribonucleotide nucleotidyltransferase.